A 235-amino-acid chain; its full sequence is Sugar fermentation stimulation protein homolog (235 aa).

This sequence belongs to the SfsA family.

The protein is Sugar fermentation stimulation protein homolog of Azotobacter vinelandii (strain DJ / ATCC BAA-1303).